The sequence spans 417 residues: Peptidyl-Asp metalloendopeptidase (417 aa).

The N-terminal stretch at 1–25 (MLSRSIGKAAGGLVLGLSVAAAAHA) is a signal peptide. Position 327 (H327) interacts with Zn(2+). Residue E328 is part of the active site. Zn(2+) contacts are provided by H331 and H337.

This sequence belongs to the peptidase M72 family. The cofactor is Zn(2+).

The catalysed reaction is Cleavage of Xaa-|-Asp, Xaa-|-Glu and Xaa-|-cysteic acid bonds.. Functionally, metalloprotease, specifically cleaves on the N-terminal side of aspartyl, glutamyl and cysteic acid residues. The chain is Peptidyl-Asp metalloendopeptidase from Stenotrophomonas maltophilia (strain K279a).